The primary structure comprises 152 residues: Ubiquitin-conjugating enzyme E2 2 (152 aa).

In terms of domain architecture, UBC core spans P4–T150. C88 (glycyl thioester intermediate) is an active-site residue.

This sequence belongs to the ubiquitin-conjugating enzyme family. In terms of tissue distribution, expressed in all tissues examined. Lower levels found in leaves.

The catalysed reaction is S-ubiquitinyl-[E1 ubiquitin-activating enzyme]-L-cysteine + [E2 ubiquitin-conjugating enzyme]-L-cysteine = [E1 ubiquitin-activating enzyme]-L-cysteine + S-ubiquitinyl-[E2 ubiquitin-conjugating enzyme]-L-cysteine.. Its pathway is protein modification; protein ubiquitination. Functionally, accepts the ubiquitin from the E1 complex and catalyzes its covalent attachment to other proteins. The protein is Ubiquitin-conjugating enzyme E2 2 (UBC2) of Arabidopsis thaliana (Mouse-ear cress).